The chain runs to 238 residues: MRPSGRRADELRPISIQRQFTKHAEGSVLIGFGDTRVLCTASVEARVPPWLRGQGRGWVTAEYGMLPRSTHTRSDREAARGKQQGRTVEIQRLIGRSLRAAVDLQALGERSVVVDCDVLQADGGTRTAAITGAFVALTDALEGLVRQRALPASPLHGQVASVSVGVYRGEPVLDLDYAEDGEAETDMNVVMNDAGAFIELQGTAEGHAFRRDELDRMLALAEKGVGELLQHQQEALAT.

Residues Arg86 and 124 to 126 contribute to the phosphate site; that span reads GTR.

It belongs to the RNase PH family. As to quaternary structure, homohexameric ring arranged as a trimer of dimers.

The catalysed reaction is tRNA(n+1) + phosphate = tRNA(n) + a ribonucleoside 5'-diphosphate. Its function is as follows. Phosphorolytic 3'-5' exoribonuclease that plays an important role in tRNA 3'-end maturation. Removes nucleotide residues following the 3'-CCA terminus of tRNAs; can also add nucleotides to the ends of RNA molecules by using nucleoside diphosphates as substrates, but this may not be physiologically important. Probably plays a role in initiation of 16S rRNA degradation (leading to ribosome degradation) during starvation. In Halorhodospira halophila (strain DSM 244 / SL1) (Ectothiorhodospira halophila (strain DSM 244 / SL1)), this protein is Ribonuclease PH.